Reading from the N-terminus, the 314-residue chain is Melanoma-associated antigen 2 (314 aa).

A compositionally biased stretch (basic and acidic residues) spans Met-1–Gly-20. The interval Met-1 to Ser-69 is disordered. Positions Glu-21–Thr-44 are enriched in low complexity. A Phosphoserine modification is found at Ser-64. In terms of domain architecture, MAGE spans Ile-109–Ala-308.

Interacts with TRIM28 and UBE2H. Interacts with HDAC3. Interacts with PML (isoform PML-1, isoform PML-2, isoform PML-3, isoform PML-4 and isoform PML-5). Expressed in many tumors of several types, such as melanoma, head and neck squamous cell carcinoma, lung carcinoma and breast carcinoma, but not in normal tissues except for testes.

It localises to the nucleus. The protein resides in the PML body. Functionally, reduces p53/TP53 transactivation function through recruitment of HDAC3 to p53/TP53 transcription sites. Also represses p73/TP73 activity. Proposed to enhance ubiquitin ligase activity of RING-type zinc finger-containing E3 ubiquitin-protein ligases. In vitro enhances ubiquitin ligase activity of TRIM28 and stimulates p53/TP53 ubiquitination by TRIM28 potentially in presence of Ubl-conjugating enzyme UBE2H. Proposed to act through recruitment and/or stabilization of the Ubl-conjugating enzyme (E2) at the E3:substrate complex. May play a role in embryonal development and tumor transformation or aspects of tumor progression. In vitro promotes cell viability in melanoma cell lines. Antigen recognized on a melanoma by autologous cytolytic T-lymphocytes. Negatively regulates acetylation and sumoylation of PML and represses PML-induced p53/TP53 acetylation and activation. In Homo sapiens (Human), this protein is Melanoma-associated antigen 2 (MAGEA2).